Here is a 240-residue protein sequence, read N- to C-terminus: MKKTVEVLPDQTALIARSLDLILTKLDTAIKQQGRFTIALSGGSTPKPLYEAIAAQKLPWDKIHVFWGDERYVSPDHPDSNELMARTAWLDRVDIPAENIHAVPTLDNNPAVSAAKYEQHLQTFFNSAPGEFPALDVVLLGMGDDAHTASLFPHTEALQVRDRLITVGNKDGNPRITFTYPFINAASSVIFVVAGANKRPALAQVFAPSADDLAYPSRFIQPQGELLWLLDAAAGAELSV.

It belongs to the glucosamine/galactosamine-6-phosphate isomerase family. 6-phosphogluconolactonase subfamily.

The enzyme catalyses 6-phospho-D-glucono-1,5-lactone + H2O = 6-phospho-D-gluconate + H(+). It participates in carbohydrate degradation; pentose phosphate pathway; D-ribulose 5-phosphate from D-glucose 6-phosphate (oxidative stage): step 2/3. Its function is as follows. Hydrolysis of 6-phosphogluconolactone to 6-phosphogluconate. This chain is 6-phosphogluconolactonase (pgl), found in Nostoc sp. (strain PCC 7120 / SAG 25.82 / UTEX 2576).